The following is a 391-amino-acid chain: Alanine racemase, biosynthetic (391 aa).

Lys-52 (proton acceptor; specific for D-alanine) is an active-site residue. Residue Lys-52 is modified to N6-(pyridoxal phosphate)lysine. Residue Arg-149 coordinates substrate. Catalysis depends on Tyr-271, which acts as the Proton acceptor; specific for L-alanine. Residue Met-330 participates in substrate binding.

This sequence belongs to the alanine racemase family. Pyridoxal 5'-phosphate serves as cofactor.

The enzyme catalyses L-alanine = D-alanine. Its pathway is amino-acid biosynthesis; D-alanine biosynthesis; D-alanine from L-alanine: step 1/1. The protein operates within cell wall biogenesis; peptidoglycan biosynthesis. Functionally, catalyzes the interconversion of L-alanine and D-alanine. Provides the D-alanine required for cell wall biosynthesis. This Agrobacterium fabrum (strain C58 / ATCC 33970) (Agrobacterium tumefaciens (strain C58)) protein is Alanine racemase, biosynthetic (alr).